We begin with the raw amino-acid sequence, 833 residues long: Leucine--tRNA ligase (833 aa).

The 'HIGH' region signature appears at 41–52; that stretch reads PYPSGAGLHVGH. The short motif at 610–614 is the 'KMSKS' region element; that stretch reads KMSKS. Lysine 613 is a binding site for ATP.

It belongs to the class-I aminoacyl-tRNA synthetase family.

The protein localises to the cytoplasm. It carries out the reaction tRNA(Leu) + L-leucine + ATP = L-leucyl-tRNA(Leu) + AMP + diphosphate. The polypeptide is Leucine--tRNA ligase (Streptococcus pneumoniae (strain 70585)).